We begin with the raw amino-acid sequence, 373 residues long: tRNA/tmRNA (uracil-C(5))-methyltransferase (373 aa).

S-adenosyl-L-methionine-binding residues include Q190, Y219, N224, E240, and D300. C325 acts as the Nucleophile in catalysis. The active-site Proton acceptor is the E359.

It belongs to the class I-like SAM-binding methyltransferase superfamily. RNA M5U methyltransferase family. TrmA subfamily.

The catalysed reaction is uridine(54) in tRNA + S-adenosyl-L-methionine = 5-methyluridine(54) in tRNA + S-adenosyl-L-homocysteine + H(+). It carries out the reaction uridine(341) in tmRNA + S-adenosyl-L-methionine = 5-methyluridine(341) in tmRNA + S-adenosyl-L-homocysteine + H(+). Dual-specificity methyltransferase that catalyzes the formation of 5-methyluridine at position 54 (m5U54) in all tRNAs, and that of position 341 (m5U341) in tmRNA (transfer-mRNA). The polypeptide is tRNA/tmRNA (uracil-C(5))-methyltransferase (Chromohalobacter salexigens (strain ATCC BAA-138 / DSM 3043 / CIP 106854 / NCIMB 13768 / 1H11)).